We begin with the raw amino-acid sequence, 85 residues long: Small ribosomal subunit protein bS20 (85 aa).

Disordered regions lie at residues 1–25 (MANI…ASIK) and 62–85 (ARKG…QVNA).

Belongs to the bacterial ribosomal protein bS20 family.

Functionally, binds directly to 16S ribosomal RNA. This chain is Small ribosomal subunit protein bS20, found in Bacillus cereus (strain G9842).